The chain runs to 213 residues: MKEIVTIENVSFNYRNRAVFKDFNLSIEKGDFLCVLGESGSGKSTLLGLILGLLKPSLGSVKIFNETLSNNAFLRQKIGYIAQGNSLFSHLNALQNMTFCLNLQGINKQAAQKEAKALALKMGLDESLMDKFPNELSGGQAQRVGIIRGIIHKPELILLDEPFSALDSFNRKNLQDLIKEIHQNSCATFIMVTHDEEEAQKLATKTLEIKALK.

Positions 5-212 (VTIENVSFNY…ATKTLEIKAL (208 aa)) constitute an ABC transporter domain. Residue 37 to 44 (GESGSGKS) participates in ATP binding.

This sequence belongs to the ABC transporter superfamily. The complex is composed of two ATP-binding proteins (EgtV) and two transmembrane proteins (EgtU).

It is found in the cell inner membrane. The catalysed reaction is ergothioneine(out) + ATP + H2O = ergothioneine(in) + ADP + phosphate + H(+). Functionally, part of the ABC transporter complex EgtUV involved in the uptake of ergothioneine (EGT), a natural low-molecular weight (LMW) thiol antioxidant which protects H.pylori against bleach stress. Responsible for energy coupling to the transport system. The chain is Ergothioneine transport ATP-binding protein EgtV from Helicobacter pylori (strain G27).